Consider the following 240-residue polypeptide: Uridylate kinase (240 aa).

An ATP-binding site is contributed by 14-17 (KLSG). A UMP-binding site is contributed by G56. ATP is bound by residues G57 and R61. UMP contacts are provided by residues D76 and 137-144 (TGNPFFTT). 3 residues coordinate ATP: T164, Y170, and D173.

The protein belongs to the UMP kinase family. In terms of assembly, homohexamer.

The protein resides in the cytoplasm. It catalyses the reaction UMP + ATP = UDP + ADP. It participates in pyrimidine metabolism; CTP biosynthesis via de novo pathway; UDP from UMP (UMPK route): step 1/1. Its activity is regulated as follows. Inhibited by UTP. Its function is as follows. Catalyzes the reversible phosphorylation of UMP to UDP. The polypeptide is Uridylate kinase (Paracidovorax citrulli (strain AAC00-1) (Acidovorax citrulli)).